The primary structure comprises 844 residues: Protein translocase subunit SecA 1 (844 aa).

ATP contacts are provided by residues glutamine 91, 109 to 113 (GEGKT), and aspartate 498. Residues 793–813 (KSKSFGEAKHVTAEDGKEKAK) show a composition bias toward basic and acidic residues. The segment at 793–825 (KSKSFGEAKHVTAEDGKEKAKPQPIVKGDQVGR) is disordered. The Zn(2+) site is built by cysteine 829, cysteine 831, cysteine 840, and histidine 841.

Belongs to the SecA family. Monomer and homodimer. Part of the essential Sec protein translocation apparatus which comprises SecA, SecYEG and auxiliary proteins SecDF. Other proteins may also be involved. Zn(2+) serves as cofactor.

The protein resides in the cell membrane. Its subcellular location is the cytoplasm. The enzyme catalyses ATP + H2O + cellular proteinSide 1 = ADP + phosphate + cellular proteinSide 2.. Functionally, part of the Sec protein translocase complex. Interacts with the SecYEG preprotein conducting channel. Has a central role in coupling the hydrolysis of ATP to the transfer of proteins into and across the cell membrane, serving as an ATP-driven molecular motor driving the stepwise translocation of polypeptide chains across the membrane. This chain is Protein translocase subunit SecA 1, found in Staphylococcus epidermidis (strain ATCC 35984 / DSM 28319 / BCRC 17069 / CCUG 31568 / BM 3577 / RP62A).